A 206-amino-acid chain; its full sequence is CASP-like protein 2C1 (206 aa).

Over 1 to 31 the chain is Cytoplasmic; it reads MSVLGVGPRTVTPHLRKGMMESSSGISLARA. Residues 32 to 52 traverse the membrane as a helical segment; that stretch reads EAFLRLFAILVLVLTACLLGF. Residues 53–71 are Extracellular-facing; the sequence is DTQTKLLFSTIKKTATFRD. The helical transmembrane segment at 72 to 92 threads the bilayer; the sequence is LGALQVVVYVDSVAAGYNLLQ. The Cytoplasmic segment spans residues 93–111; that stretch reads LGRGFISAKLKGKLINVSY. A helical transmembrane segment spans residues 112–132; that stretch reads VTLPWVCFLLDQAAVYTVFSA. Over 133–161 the chain is Extracellular; that stretch reads NTAALQASIIAVTGESSLQWMKVCNRYTR. Residues 162–182 traverse the membrane as a helical segment; that stretch reads FCIQVGGALLSGYLASLLMVL. At 183–206 the chain is on the cytoplasmic side; sequence LSSLSAFSLFRLYSPKQFHLLKPT.

This sequence belongs to the Casparian strip membrane proteins (CASP) family. In terms of assembly, homodimer and heterodimers.

It is found in the cell membrane. This chain is CASP-like protein 2C1, found in Vitis vinifera (Grape).